Reading from the N-terminus, the 635-residue chain is Chaperone protein DnaK (635 aa).

Thr-200 carries the phosphothreonine; by autocatalysis modification. Residues 595-635 (KAQPLTEKVQAKSSAENTSKEKSKADDDVVDADFEEVKDDK) are disordered. Basic and acidic residues predominate over residues 612-621 (TSKEKSKADD). A compositionally biased stretch (acidic residues) spans 622–635 (DVVDADFEEVKDDK).

Belongs to the heat shock protein 70 family.

Functionally, acts as a chaperone. The polypeptide is Chaperone protein DnaK (Ruthia magnifica subsp. Calyptogena magnifica).